The following is a 629-amino-acid chain: Chaperone protein HtpG (629 aa).

An a; substrate-binding region spans residues 1–335 (MSSNPTSSVR…TEDLPLNVSR (335 aa)). The b stretch occupies residues 336-547 (ELVQASPVMA…KDALDSQFEK (212 aa)). Residues 548–629 (MMKMMNKDAD…NELVEAATRS (82 aa)) are c.

The protein belongs to the heat shock protein 90 family. As to quaternary structure, homodimer.

Its subcellular location is the cytoplasm. Functionally, molecular chaperone. Has ATPase activity. The protein is Chaperone protein HtpG of Chlorobaculum tepidum (strain ATCC 49652 / DSM 12025 / NBRC 103806 / TLS) (Chlorobium tepidum).